Here is a 210-residue protein sequence, read N- to C-terminus: Protein GrpE (210 aa).

The disordered stretch occupies residues M1–L71. Over residues T11–Q23 the composition is skewed to acidic residues. Positions N24–T35 are enriched in polar residues. The segment covering D36–E46 has biased composition (low complexity). Over residues N47–S60 the composition is skewed to acidic residues. The span at Q61–L71 shows a compositional bias: basic and acidic residues.

This sequence belongs to the GrpE family. As to quaternary structure, homodimer.

The protein localises to the cytoplasm. Participates actively in the response to hyperosmotic and heat shock by preventing the aggregation of stress-denatured proteins, in association with DnaK and GrpE. It is the nucleotide exchange factor for DnaK and may function as a thermosensor. Unfolded proteins bind initially to DnaJ; upon interaction with the DnaJ-bound protein, DnaK hydrolyzes its bound ATP, resulting in the formation of a stable complex. GrpE releases ADP from DnaK; ATP binding to DnaK triggers the release of the substrate protein, thus completing the reaction cycle. Several rounds of ATP-dependent interactions between DnaJ, DnaK and GrpE are required for fully efficient folding. The protein is Protein GrpE of Staphylococcus epidermidis (strain ATCC 35984 / DSM 28319 / BCRC 17069 / CCUG 31568 / BM 3577 / RP62A).